A 337-amino-acid chain; its full sequence is Ral GTPase-activating protein subunit alpha-1 (337 aa).

Component of the heterodimeric RalGAP1 complex with RALGAPB. Heterodimerization is required for activity. Interacts with the HLH region of TCF3/isoform E12.

It is found in the cytoplasm. The protein localises to the nucleus. In terms of biological role, catalytic subunit of the heterodimeric RalGAP1 complex which acts as a GTPase activator for the Ras-like small GTPases RALA and RALB. This is Ral GTPase-activating protein subunit alpha-1 from Sus scrofa (Pig).